The chain runs to 222 residues: uncharacterized protein (222 aa).

Transmembrane regions (helical) follow at residues 26–46, 48–68, 75–95, 107–127, 139–159, 166–186, and 198–218; these read YGLL…SQQM, LPYP…FLTV, WGLV…GPIL, VITS…AYVL, FITA…FFQI, ISAG…SAII, and ISLY…FGIA.

The protein belongs to the BI1 family.

It is found in the cell membrane. This is an uncharacterized protein from Pseudomonas aeruginosa (strain ATCC 15692 / DSM 22644 / CIP 104116 / JCM 14847 / LMG 12228 / 1C / PRS 101 / PAO1).